The sequence spans 360 residues: Peptide chain release factor 1 (360 aa).

At Q235 the chain carries N5-methylglutamine. A compositionally biased stretch (basic and acidic residues) spans 281–307 (ERQRADSERSADRRSQVGSGDRSERIR). Residues 281-311 (ERQRADSERSADRRSQVGSGDRSERIRTYNF) form a disordered region.

The protein belongs to the prokaryotic/mitochondrial release factor family. In terms of processing, methylated by PrmC. Methylation increases the termination efficiency of RF1.

The protein resides in the cytoplasm. Its function is as follows. Peptide chain release factor 1 directs the termination of translation in response to the peptide chain termination codons UAG and UAA. This is Peptide chain release factor 1 from Rhizobium meliloti (strain 1021) (Ensifer meliloti).